The primary structure comprises 456 residues: Peptide chain release factor PrfB1, chloroplastic (456 aa).

The N-terminal 58 residues, 1 to 58, are a transit peptide targeting the chloroplast; it reads MSMELTVLGPLAGRSFAIAGKPKLLLLRPTNLPLLRLSLPLSLPNFSSSSRFNSPIVF.

This sequence belongs to the prokaryotic/mitochondrial release factor family. As to expression, expressed in leaves, stems and flowers.

The protein resides in the plastid. It is found in the chloroplast stroma. In terms of biological role, directs the termination of translation in response to the peptide chain termination codon UGA. Required for the proper translation, stability and normal processing of UGA-containing polycistronic transcripts in chloroplasts. The polypeptide is Peptide chain release factor PrfB1, chloroplastic (Arabidopsis thaliana (Mouse-ear cress)).